The primary structure comprises 543 residues: Hydroxylamine reductase (543 aa).

[4Fe-4S] cluster-binding residues include cysteine 5, cysteine 8, cysteine 17, and cysteine 23. The hybrid [4Fe-2O-2S] cluster site is built by histidine 250, glutamate 274, cysteine 318, cysteine 410, cysteine 438, cysteine 463, glutamate 498, and lysine 500. Cysteine 410 is modified (cysteine persulfide).

This sequence belongs to the HCP family. [4Fe-4S] cluster is required as a cofactor. Requires hybrid [4Fe-2O-2S] cluster as cofactor.

Its subcellular location is the cytoplasm. The catalysed reaction is A + NH4(+) + H2O = hydroxylamine + AH2 + H(+). Functionally, catalyzes the reduction of hydroxylamine to form NH(3) and H(2)O. This is Hydroxylamine reductase from Petrotoga mobilis (strain DSM 10674 / SJ95).